Here is a 195-residue protein sequence, read N- to C-terminus: Achaete-scute homolog 1b (195 aa).

Residues 66–118 (MAVARRNERERNRVKQVNMGFQTLRQHVPNGAANKKMSKVETLRSAVEYIRAL) enclose the bHLH domain. The disordered stretch occupies residues 141-164 (VSNAYSAGPESPHSAYSSDEGSYE).

Efficient DNA binding requires dimerization with another bHLH protein. As to expression, in the 24 hours embryo, expressed in hindbrain close to the anterior and posterior boundaries of rhombomeres 2-6 and in ventral cells close to the floor plate of most rhombomeres. Also expressed in the telencephalon, diencephalon, tegmentum and spinal cord at sites distinct from those expressing ascl1a. Not expressed in the adenohypophysis.

The protein localises to the nucleus. Functionally, transcriptional regulator. May mediate transcription activation by binding to the E box-containing promoter. Involved in neurogenesis. Involved in maintaining rhombomere boundaries in the hindbrain, probably via up-regulation of delta expression. May mediate transcription activation by binding to the E box-containing promoter. This Danio rerio (Zebrafish) protein is Achaete-scute homolog 1b.